The following is a 507-amino-acid chain: Cyclic GMP-AMP synthase (507 aa).

The DNA-binding stretch occupies residues 1-146 (MEDPRRRTTA…PRAPRGSRKE (146 aa)). The segment at 1 to 151 (MEDPRRRTTA…GSRKEPDKLK (151 aa)) is disordered. Positions 7–18 (RTTAPRAKKPSA) are enriched in basic residues. Residues 44-57 (RRAERDGDTTEKPR) are compositionally biased toward basic and acidic residues. The segment at 48 to 59 (RDGDTTEKPRAP) is required for association with the cell membrane. T52 bears the Phosphothreonine mark. Positions 119–132 (RKVVRGPSHRRGAR) are required for activation upon DNA viral infection. Basic residues predominate over residues 121–131 (VVRGPSHRRGA). The Nuclear export signal motif lies at 154-159 (LDKLRL). Residue K156 is modified to N6-lactoyllysine. The DNA-binding stretch occupies residues 158-201 (RLKRKDISEAAETVNKVVERLLRRMQKRESEFKGVEQLNTGSYY). E176 carries the polyADP-ribosyl glutamic acid modification. Residue T197 coordinates GTP. S199 contributes to the ATP binding site. S199 carries the post-translational modification Phosphoserine. Y201 bears the Phosphotyrosine mark. Residues E211 and D213 each contribute to the Mg(2+) site. Position 213 (D213) interacts with 2',3'-cGAMP. Residue K217 forms a Glycyl lysine isopeptide (Lys-Gly) (interchain with G-Cter in SUMO) linkage. K271 participates in a covalent cross-link: Glycyl lysine isopeptide (Lys-Gly) (interchain with G-Cter in ubiquitin). E272 is subject to 5-glutamyl polyglutamate. A Nuclear localization signal motif is present at residues 281-291 (DVSVEKEKPGS). G290 contacts 2',3'-cGAMP. At S291 the chain carries Phosphoserine; by CDK1 and PKB. E302 is subject to 5-glutamyl glutamate. D307 lines the GTP pocket. Residue D307 coordinates Mg(2+). D307 contributes to the 2',3'-cGAMP binding site. The segment at 329 to 370 (QGWLGTKVRTNLRREPFYLVPKNAKDGNSFQGETWRLSFSHT) is interaction with collided ribosomes. A Glycyl lysine isopeptide (Lys-Gly) (interchain with G-Cter in SUMO); alternate cross-link involves residue K335. K335 participates in a covalent cross-link: Glycyl lysine isopeptide (Lys-Gly) (interchain with G-Cter in ubiquitin); alternate. 2',3'-cGAMP contacts are provided by residues K350 and 364–366 (RLS). 364 to 371 (RLSFSHTE) is a GTP binding site. E371 lines the ATP pocket. Residue K372 forms a Glycyl lysine isopeptide (Lys-Gly) (interchain with G-Cter in SUMO); alternate linkage. A Glycyl lysine isopeptide (Lys-Gly) (interchain with G-Cter in ubiquitin); alternate cross-link involves residue K372. Position 372 is an N6-acetyllysine (K372). A DNA-binding region spans residues 372-395 (KYILNNHGIEKTCCESSGAKCCRK). H378 lines the Zn(2+) pocket. Residue K382 forms a Glycyl lysine isopeptide (Lys-Gly) (interchain with G-Cter in SUMO) linkage. K382 is subject to N6-acetyllysine. C384, C385, and C392 together coordinate Zn(2+). S-palmitoyl cysteine attachment occurs at residues C392 and C393. Residues K399, K402, K409, and K410 each participate in a glycyl lysine isopeptide (Lys-Gly) (interchain with G-Cter in ubiquitin) cross-link. K402 is an ATP binding site. Position 402 is an N6-acetyllysine (K402). S420 carries the post-translational modification Phosphoserine. 420–424 (SYHVK) provides a ligand contact to ATP. The S-palmitoyl cysteine moiety is linked to residue C459. K464 participates in a covalent cross-link: Glycyl lysine isopeptide (Lys-Gly) (interchain with G-Cter in SUMO); alternate. K464 is covalently cross-linked (Glycyl lysine isopeptide (Lys-Gly) (interchain with G-Cter in ubiquitin); alternate). An N6-methyllysine modification is found at K491.

It belongs to the mab-21 family. In terms of assembly, monomer in the absence of DNA. Homodimer in presence of dsDNA: forms a 2:2 dimer with two enzymes binding to two DNA molecules. Interacts with nucleosomes; interaction is mainly mediated via histones H2A and H2B and inactivates the nucleotidyltransferase activity by blocking DNA-binding and subsequent activation. Interacts with PQBP1 (via WW domain). Interacts with TRIM14; this interaction recruits USP14, leading to deubiquitinate and stabilize CGAS and promote type I interferon production. Interacts with ZCCHC3; promoting sensing of dsDNA by CGAS. Interacts (when not monomethylated) with (poly-ADP-ribosylated) PARP1; interaction takes place in the nucleus and prevents the formation of the PARP1-TIMELESS complex. Interacts (when monomethylated) with SGF29; interaction with SGF29 prevents interaction with PARP1. Interacts with PCBP2; preventing the formation of liquid-like droplets in which CGAS is activated. Interacts with Irgm1; promoting CGAS degradation. Interacts with DDX41. The cofactor is Mg(2+). Mn(2+) is required as a cofactor. Zn(2+) serves as cofactor. In terms of processing, the N-terminal disordered part (1-146) is phosphorylated by AURKB during the G2-M transition, blocking CGAS liquid phase separation and preventing activation. Phosphorylation at Tyr-201 by BLK promotes cytosolic retention. Localizes into the nucleus following dephosphorylation at Tyr-201. Phosphorylation at Ser-420 activates the nucleotidyltransferase activity. Dephosphorylation at Ser-420 by PPP6C impairs its ability to bind GTP, thereby inactivating it. Phosphorylation at Thr-52 and Ser-199 by PRKDC inhibits its cyclic GMP-AMP synthase activity by impairing homodimerization and activation. Phosphorylation at Ser-291 by AKT (AKT1, AKT2 or AKT3) suppresses the nucleotidyltransferase activity. Phosphorylation at Ser-291 by CDK1 during mitosis leads to its inhibition, thereby preventing CGAS activation by self-DNA during mitosis. Dephosphorylated at Ser-291 by protein phosphatase PP1 upon mitotic exit. Ubiquitinated at Lys-402 via 'Lys-48'-linked polyubiquitin chains, leading to its SQSTM1-mediated autophagic degradation. Interaction with TRIM14 promotes recruitment of USP14, leading to deubiquitinate Lys-402 and stabilize CGAS. Ubiquitinated at Lys-372 by RNF185 via 'Lys-27'-linked polyubiquitination, promoting CGAS cyclic GMP-AMP synthase activity. Monoubiquitination at Lys-335 by TRIM56 promotes oligomerization and subsequent activation. Monoubiquitination by TRIM41 promotes CGAS activation. Ubiquitination at Lys-271 and Lys-464 via 'Lys-48'-linked polyubiquitination promotes its degradation. Deubiquitination at Lys-271 by USP29 promotes its stabilization. Deubiquitinated by USP27X, promoting its stabilization. Ubiquitinated at Lys-399 via 'Lys-63'-linked polyubiquitin chains by MARCHF8, leading to the inhibition of its DNA binding ability. In cycling cells, nucleosome-bound CGAS is ubiquitinated at Lys-409 and Lys-410 via 'Lys-48'-linked polyubiquitin chains by the ECS(SPSB3) complex, leading to its degradation: ubiquitination and degradation of nuclear CGAS during G1 and G2 phases is required to promote low intranuclear CGAS abundance before the next mitotic cycle. Post-translationally, sumoylated at Lys-217 and Lys-464 by TRIM38 in uninfected cells and during the early phase of viral infection, promoting its stability by preventing ubiquitination at Lys-271 and Lys-464, and subsequent degradation. Desumoylated by SENP2 during the late phase of viral infection. Sumoylation at Lys-335, Lys-372 and Lys-382 prevents DNA-binding, oligomerization and nucleotidyltransferase activity. Desumoylation at Lys-335, Lys-372 and Lys-382 by SENP7 relieves inhibition and activates CGAS. In terms of processing, polyglutamylated by TTLL6 at Glu-272, leading to impair DNA-binding activity. Monoglutamylated at Glu-302 by TTLL4, leading to impair the nucleotidyltransferase activity. Deglutamylated by AGBL5/CCP5 and AGBL6/CCP6. Acetylation at Lys-372, Lys-382 and Lys-402 inhibits the cyclic GMP-AMP synthase activity. Deacetylated upon cytosolic DNA challenge such as viral infections. Acetylation by KAT5 increases the cyclic GMP-AMP synthase activity by promoting DNA-binding and subsequent activation. Post-translationally, proteolytically cleaved by apoptotic caspases during apoptosis, leading to its inactivation. The damage of the nucleus and the mitochondria during apoptosis leads to leakage of nuclear and mitochondrial DNA, which activate CGAS: cleavage and inactivation during apoptosis in required to prevent cytokine overproduction. Cleaved by CASP7 and CASP3 during virus-induced apoptosis, thereby inactivating it and preventing cytokine overproduction. Cleaved by CASP1 upon DNA virus infection; the cleavage impairs cGAMP production. Also cleaved by the pyroptotic CASP4 during non-canonical inflammasome activation; does not cut at the same sites than CASP1. In terms of processing, degraded via selective autophagy following interaction with Irgm1. Irgm1 promotes CGAS recruitment to autophagosome membranes, promoting its SQSTM1/p62-dependent autophagic degradation. Poly-ADP-ribosylation at Glu-176 by PARP1 impairs DNA-binding, thereby preventing the cyclic GMP-AMP synthase activity. Post-translationally, palmitoylation at Cys-459 by ZDHHC18 impairs DNA-binding, thereby preventing the cyclic GMP-AMP synthase activity. Palmitoylation at Cys-392 and Cys-393 by ZDHHC9 promotes homodimerization and cyclic GMP-AMP synthase activity. Depalmitoylation at Cys-392 and Cys-393 by LYPLAL1 impairs homodimerization and cyclic GMP-AMP synthase activity. In terms of processing, monomethylated at Lys-491 by SETD7. Monomethylation promotes interaction with SGF29, preventing interaction between PARP1 nad SGF29. Demethylation by RIOX1 promotes interaction with PARP1, followed by PARP1 inactivation. Lactylation by AARS2 prevents ability to undergo liquid-liquid phase separation (LLPS), thereby inhibiting CGAS activation.

Its subcellular location is the nucleus. The protein resides in the chromosome. It localises to the cell membrane. It is found in the cytoplasm. The protein localises to the cytosol. The enzyme catalyses GTP + ATP = 2',3'-cGAMP + 2 diphosphate. The catalysed reaction is GTP + ATP = pppGp(2'-5')A + diphosphate. It catalyses the reaction pppGp(2'-5')A = 2',3'-cGAMP + diphosphate. Its activity is regulated as follows. The enzyme activity is strongly increased by double-stranded DNA (dsDNA), but not by single-stranded DNA or RNA. DNA-binding induces the formation of liquid-like droplets in which CGAS is activated. Liquid-like droplets also create a selective environment that restricts entry of negative regulators, such as TREX1 or BANF1/BAF, allowing sensing of DNA. A number of mechanisms exist to restrict its activity toward self-DNA. The nucleotidyltransferase activity is inhibited in the nucleus via its association with nucleosomes: interacts with the acidic patch of histones H2A and H2B, thereby blocking DNA-binding and subsequent activation. CGAS is also inactive when associated with mitotic chromatin. Chromatin-bound CGAS cannot be activated by exogenous DNA in mitotic cells: phosphorylation of the N-terminal disordered part by AURKB during the G2-M transition blocks CGAS liquid phase separation and activation. Activity toward self-DNA is inhibited by BANF1/BAF upon acute loss of nuclear membrane integrity: BANF1/BAF acts by outcompeting CGAS for DNA-binding, thereby preventing CGAS activation. DNA-induced activation at micronuclei is also limited by TREX1, which degrades micronuclear DNA upon nuclear envelope rupture, thereby preventing CGAS activation. CGAS can be released from nucleosomes and activated by MRE11 component of the MRN complex, which displaces CGAS from acidic-patch-mediated sequestration. Acetylation at Lys-372, Lys-382 and Lys-402 inhibits the cyclic GMP-AMP synthase activity. Acetylation by KAT5 increases the cyclic GMP-AMP synthase activity by promoting DNA-binding and subsequent activation. Phosphorylation at Ser-291 suppresses the nucleotidyltransferase activity. Phosphorylation at Ser-420 promotes the cyclic GMP-AMP synthase activity. Phosphorylation at Thr-52 and Ser-199 inhibits its cyclic GMP-AMP synthase activity. Ubiquitination at Lys-372 via 'Lys-27'-linked polyubiquitination enhances the cyclic GMP-AMP synthase activity. Monoubiquitination at Lys-335 promotes oligomerization and subsequent activation. Sumoylation at Lys-335, Lys-372 and Lys-382 prevents DNA-binding, oligomerization and nucleotidyltransferase activity. The enzyme activity is impaired by the cleavage by CASP1. In addition to DNA, also activated by collided ribosomes upon translation stress: specifically binds collided ribosomes, promoting its activation and triggering type-I interferon production. In hematopoietic stem cells, binding to circular RNA cia-cGAS inhibits the cyclic GMP-AMP synthase activity. Strongly inhibited by compound RU.521, which is specific for mouse protein. In terms of biological role, nucleotidyltransferase that catalyzes the formation of cyclic GMP-AMP (2',3'-cGAMP) from ATP and GTP and plays a key role in innate immunity. Catalysis involves both the formation of a 2',5' phosphodiester linkage at the GpA step and the formation of a 3',5' phosphodiester linkage at the ApG step, producing c[G(2',5')pA(3',5')p]. Acts as a key DNA sensor: directly binds double-stranded DNA (dsDNA), inducing the formation of liquid-like droplets in which CGAS is activated, leading to synthesis of 2',3'-cGAMP, a second messenger that binds to and activates STING1, thereby triggering type-I interferon production. Preferentially binds long dsDNA (around 45 bp) and forms ladder-like networks that function cooperatively to stabilize individual cGAS-dsDNA complexes. Acts as a key foreign DNA sensor, the presence of double-stranded DNA (dsDNA) in the cytoplasm being a danger signal that triggers the immune responses. Has antiviral activity by sensing the presence of dsDNA from DNA viruses in the cytoplasm. Also acts as an innate immune sensor of infection by retroviruses by detecting the presence of reverse-transcribed DNA in the cytosol. Detection of retroviral reverse-transcribed DNA in the cytosol may be indirect and be mediated via interaction with PQBP1, which directly binds reverse-transcribed retroviral DNA. Also detects the presence of DNA from bacteria. 2',3'-cGAMP can be transferred from producing cells to neighboring cells through gap junctions, leading to promote STING1 activation and convey immune response to connecting cells. 2',3'-cGAMP can also be transferred between cells by virtue of packaging within viral particles contributing to IFN-induction in newly infected cells in a cGAS-independent but STING1-dependent manner. Also senses the presence of neutrophil extracellular traps (NETs) that are translocated to the cytosol following phagocytosis, leading to synthesis of 2',3'-cGAMP. In addition to foreign DNA, can also be activated by endogenous nuclear or mitochondrial DNA. When self-DNA leaks into the cytosol during cellular stress (such as mitochondrial stress, DNA damage, mitotic arrest or senescence), or is present in form of cytosolic micronuclei, CGAS is activated leading to a state of sterile inflammation. Acts as a regulator of cellular senescence by binding to cytosolic chromatin fragments that are present in senescent cells, leading to trigger type-I interferon production via STING1 and promote cellular senescence. Also involved in the inflammatory response to genome instability and double-stranded DNA breaks: acts by localizing to micronuclei arising from genome instability. Micronuclei, which as frequently found in cancer cells, consist of chromatin surrounded by its own nuclear membrane: following breakdown of the micronuclear envelope, a process associated with chromothripsis, CGAS binds self-DNA exposed to the cytosol, leading to 2',3'-cGAMP synthesis and subsequent activation of STING1 and type-I interferon production. In a healthy cell, CGAS is however kept inactive even in cellular events that directly expose it to self-DNA, such as mitosis, when cGAS associates with chromatin directly after nuclear envelope breakdown or remains in the form of postmitotic persistent nuclear cGAS pools bound to chromatin. Nuclear CGAS is inactivated by chromatin via direct interaction with nucleosomes, which block CGAS from DNA binding and thus prevent CGAS-induced autoimmunity. Also acts as a suppressor of DNA repair in response to DNA damage: inhibits homologous recombination repair by interacting with PARP1, the CGAS-PARP1 interaction leading to impede the formation of the PARP1-TIMELESS complex. In addition to DNA, also sense translation stress: in response to translation stress, translocates to the cytosol and associates with collided ribosomes, promoting its activation and triggering type-I interferon production. The protein is Cyclic GMP-AMP synthase of Mus musculus (Mouse).